The chain runs to 1016 residues: C2 domain-containing protein 5 (1016 aa).

The region spanning 1–109 (MPGKLKVKIV…EAATVISGWF (109 aa)) is the C2 domain. Residues D19, D26, D76, D78, S81, and D84 each coordinate Ca(2+). A Phosphoserine; by PKB/AKT2 modification is found at S197. Residues S200 and S260 each carry the phosphoserine modification. Residues 265–330 (LKEIPFNEDP…SGSAGKEGGP (66 aa)) are disordered. Residues 274-289 (PNPNTHSSGPSTPLKN) show a composition bias toward polar residues. The span at 290-318 (QTYSFSPSKSYSRQSSSSDTDLSLTPKTG) shows a compositional bias: low complexity. S293, S295, S304, S305, and S306 each carry phosphoserine. At T317 the chain carries Phosphothreonine. Gly residues predominate over residues 319–328 (MGSGSAGKEG). Phosphoserine is present on S323. The residue at position 601 (T601) is a Phosphothreonine. Positions 636–668 (VSEEMIGSPIPEPRQRSRLLRSQSESSDEVTEL) are disordered. 5 positions are modified to phosphoserine: S643, S657, S659, S661, and S662. T666 carries the phosphothreonine modification. Phosphoserine occurs at positions 671, 817, and 869.

It depends on Ca(2+) as a cofactor. Post-translationally, phosphorylated on Ser-197 by active myristoylated kinase AKT2; insulin-stimulated phosphorylation by AKT2 regulates SLC2A4/GLUT4 translocation into the plasma membrane. In terms of tissue distribution, expressed in liver, muscle and fat.

Its subcellular location is the cytoplasmic vesicle membrane. The protein localises to the cytoplasm. It localises to the cell cortex. The protein resides in the cell membrane. It is found in the cell projection. Its subcellular location is the ruffle. Required for insulin-stimulated glucose transport and glucose transporter SLC2A4/GLUT4 translocation from intracellular glucose storage vesicle (GSV) to the plasma membrane (PM) in adipocytes. Binds phospholipid membranes in a calcium-dependent manner and is necessary for the optimal membrane fusion between SLC2A4/GLUT4 GSV and the PM. In Mus musculus (Mouse), this protein is C2 domain-containing protein 5 (C2cd5).